Here is a 251-residue protein sequence, read N- to C-terminus: Flap endonuclease Xni (251 aa).

Asp104 lines the Mg(2+) pocket. In terms of domain architecture, 5'-3' exonuclease spans 160 to 250 (VLPRQLPDYW…SGNLQQLRLK (91 aa)). Residues Leu171, Ala172, Pro180, Val182, and Val185 each contribute to the K(+) site. The segment at 184 to 189 (GVGAKT) is interaction with DNA.

The protein belongs to the Xni family. It depends on Mg(2+) as a cofactor. Requires K(+) as cofactor.

Functionally, has flap endonuclease activity. During DNA replication, flap endonucleases cleave the 5'-overhanging flap structure that is generated by displacement synthesis when DNA polymerase encounters the 5'-end of a downstream Okazaki fragment. This Yersinia pestis bv. Antiqua (strain Nepal516) protein is Flap endonuclease Xni.